The chain runs to 338 residues: tRNA(Ile)-lysidine synthase (338 aa).

Residue 23–28 (SGGLDS) participates in ATP binding.

This sequence belongs to the tRNA(Ile)-lysidine synthase family.

It localises to the cytoplasm. The catalysed reaction is cytidine(34) in tRNA(Ile2) + L-lysine + ATP = lysidine(34) in tRNA(Ile2) + AMP + diphosphate + H(+). Ligates lysine onto the cytidine present at position 34 of the AUA codon-specific tRNA(Ile) that contains the anticodon CAU, in an ATP-dependent manner. Cytidine is converted to lysidine, thus changing the amino acid specificity of the tRNA from methionine to isoleucine. The polypeptide is tRNA(Ile)-lysidine synthase (Helicobacter pylori (strain J99 / ATCC 700824) (Campylobacter pylori J99)).